Reading from the N-terminus, the 690-residue chain is MSCFSQAINPITGQNSWQERGDDYDYHLEVANAGFGDMLHDWERNQKYFAALKKTIAGMREAGREVHVLDIGTGTGILSMMAVEAGADSVTACEAFLPMANCAERILAANGAGDKVRLIRKRSTEIQVGEDMPRKANLLVAELLDTELIGEGAIGIYNHAHAELLTEDALCIPARARCYAQVAQSPLAAQWNSLKTIANLDGEPLLHPPEQLKSCQGEAALHDVQLSQLPSSAFRPLTDPVEIFQFDFQRKQEREKQRAQLLKLQSKQPGAAELVFYWWDIQLDDGGEILLSCAPYWAHPQLKELAAEKGNDHPLPNVVPWRDHWMQAIYYIPKPLQLVEAGKSFHLSCHHDEYSLWFDAREEAPTKSVRRHTCTCDLHMTYSRSRIGQINQSPRNKRYLRYLEESIEAEKSNVLVLGNGCLLGLASSALGAASVLLHEPHRFSRRLLESIVKHNQLKNVQFLDKVEELEDSQLAALTHIFAEPYFLNAILPWDNFYFGTLLTKIKDRLPQNVKISPCSARIYALPVEFLDLHKIRAPVGSCEGFDLRLFDEMVERSAEQAVSLVEAQPLWEYPCRALSEPQEVLNVEFSNFSQEHSLKGSIELKHSGTCNGVALWVDWQLVEDNSPRSIVSSGPSEPVVPGEFVKWDMFVRQGVHFPRRPKEPITHLEWSTAFKPELGELNFTFGQKKL.

2 SAM-dependent MTase PRMT-type domains span residues 14–357 (QNSW…YSLW) and 366–690 (TKSV…QKKL).

This sequence belongs to the class I-like SAM-binding methyltransferase superfamily. Protein arginine N-methyltransferase family. PRMT7 subfamily.

Essential arginine methyltransferase that can both catalyze the formation of omega-N monomethylarginine (MMA) and symmetrical dimethylarginine (sDMA). Specifically mediates the symmetrical dimethylation of arginine residues in the small nuclear ribonucleoproteins SmD1 and SmD3. The chain is Protein arginine N-methyltransferase 7 (Art7) from Drosophila erecta (Fruit fly).